A 122-amino-acid chain; its full sequence is Small ribosomal subunit protein uS13 (122 aa).

The segment at 99-122 (RGQRTHTNARTRKGPAKAIAGKKK) is disordered.

Belongs to the universal ribosomal protein uS13 family. As to quaternary structure, part of the 30S ribosomal subunit. Forms a loose heterodimer with protein S19. Forms two bridges to the 50S subunit in the 70S ribosome.

Located at the top of the head of the 30S subunit, it contacts several helices of the 16S rRNA. In the 70S ribosome it contacts the 23S rRNA (bridge B1a) and protein L5 of the 50S subunit (bridge B1b), connecting the 2 subunits; these bridges are implicated in subunit movement. Contacts the tRNAs in the A and P-sites. In Rhizobium leguminosarum bv. trifolii (strain WSM2304), this protein is Small ribosomal subunit protein uS13.